The following is a 469-amino-acid chain: Spermatogenesis-associated protein 21 (469 aa).

2 disordered regions span residues 1–76 (MDNR…AGTQ) and 99–157 (HRRA…MGAP). A compositionally biased stretch (basic and acidic residues) spans 49-61 (EVRDIGERREPDR). The segment covering 62–73 (AQQQPQKPAVAA) has biased composition (low complexity). A compositionally biased stretch (polar residues) spans 105-132 (ARSQTAQKSPRTLTPVPTSAPSLPQTPA). Pro residues predominate over residues 146–157 (APGPEPAPMGAP). A coiled-coil region spans residues 198-225 (EPEEQSLQKLYQNREKSEEQLTLKQEEA). The EF-hand domain occupies 255–290 (VTLAQVEDALMSADVNGDGRVDFKDFLAVMTDTRRF). Positions 268, 270, 272, 274, and 279 each coordinate Ca(2+). Residues 424–469 (YALDQCTPPGLDPDIRSPFFQSGSQGNREHNSDSRKWLSSVPARTH) are disordered. The span at 450–459 (NREHNSDSRK) shows a compositional bias: basic and acidic residues.

In terms of biological role, involved in the differentiation of haploid spermatids. The chain is Spermatogenesis-associated protein 21 (SPATA21) from Homo sapiens (Human).